The sequence spans 391 residues: MFPNGTAPSPTSSPSSSPGGCGEGVCSRGPGSGAADGMEEPGRNSSQNGTLSEGQGSAILISFIYSVVCLVGLCGNSMVIYVILRYAKMKTATNIYILNLAIADELLMLSVPFLVTSTLLRHWPFGALLCRLVLSVDAVNMFTSIYCLTVLSVDRYVAVVHPIKAARYRRPTVAKVVNLGVWVLSLLVILPIVVFSRTAANSDGTVACNMLMPEPAQRWLVGFVLYTFLMGFLLPVGAICLCYVLIIAKMRMVALKAGWQQRKRSERKITLMVMMVVMVFVICWMPFYVVQLVNVFAEQDDATVSQLSVILGYANSCANPILYGFLSDNFKRSFQRILCLSWMDNAAEEPVDYYATALKSRAYSVEDFQPENLESGGVFRNGTCASRISTL.

The tract at residues 1-50 (MFPNGTAPSPTSSPSSSPGGCGEGVCSRGPGSGAADGMEEPGRNSSQNGT) is disordered. At 1 to 56 (MFPNGTAPSPTSSPSSSPGGCGEGVCSRGPGSGAADGMEEPGRNSSQNGTLSEGQG) the chain is on the extracellular side. N4 is a glycosylation site (N-linked (GlcNAc...) asparagine). Over residues 8–18 (PSPTSSPSSSP) the composition is skewed to low complexity. N-linked (GlcNAc...) asparagine glycosylation is found at N44 and N48. A helical membrane pass occupies residues 57 to 84 (SAILISFIYSVVCLVGLCGNSMVIYVIL). The Cytoplasmic segment spans residues 85-94 (RYAKMKTATN). A helical membrane pass occupies residues 95–120 (IYILNLAIADELLMLSVPFLVTSTLL). At 121–131 (RHWPFGALLCR) the chain is on the extracellular side. Residues C130 and C208 are joined by a disulfide bond. A helical transmembrane segment spans residues 132-153 (LVLSVDAVNMFTSIYCLTVLSV). The Cytoplasmic portion of the chain corresponds to 154-175 (DRYVAVVHPIKAARYRRPTVAK). A helical membrane pass occupies residues 176-196 (VVNLGVWVLSLLVILPIVVFS). At 197 to 219 (RTAANSDGTVACNMLMPEPAQRW) the chain is on the extracellular side. Residues 220 to 244 (LVGFVLYTFLMGFLLPVGAICLCYV) traverse the membrane as a helical segment. Residues 245 to 270 (LIIAKMRMVALKAGWQQRKRSERKIT) are Cytoplasmic-facing. Residues 271–296 (LMVMMVVMVFVICWMPFYVVQLVNVF) traverse the membrane as a helical segment. Residues 297-303 (AEQDDAT) are Extracellular-facing. The helical transmembrane segment at 304–327 (VSQLSVILGYANSCANPILYGFLS) threads the bilayer. Residues 328–391 (DNFKRSFQRI…GTCASRISTL (64 aa)) are Cytoplasmic-facing. A lipid anchor (S-palmitoyl cysteine) is attached at C339.

It belongs to the G-protein coupled receptor 1 family. Brain, pituitary, islet, jejunum, stomach, heart, spleen.

The protein localises to the cell membrane. Receptor for somatostatin with higher affinity for somatostatin-14 than -28. This receptor is coupled to phosphotyrosine phosphatase and Na(+)/H(+) exchanger via pertussis toxin insensitive G proteins. This Rattus norvegicus (Rat) protein is Somatostatin receptor type 1 (Sstr1).